A 228-amino-acid polypeptide reads, in one-letter code: uncharacterized protein (228 aa).

Positions 1–19 are cleaved as a signal peptide; the sequence is MYRYTWLLWWITILLRIQQ. 5 N-linked (GlcNAc...) asparagine; by host glycosylation sites follow: Asn41, Asn93, Asn100, Asn128, and Asn164. A helical transmembrane segment spans residues 189-209; sequence MWIIPLVIVTTIIVLICFKFP.

Belongs to the HHV-5 UL9 family.

The protein localises to the host membrane. This is an uncharacterized protein from Homo sapiens (Human).